The sequence spans 120 residues: Chaperonin GroEL (120 aa).

Residue aspartate 23–threonine 27 coordinates ATP.

The protein belongs to the chaperonin (HSP60) family. Forms a cylinder of 14 subunits composed of two heptameric rings stacked back-to-back. Interacts with the co-chaperonin GroES.

The protein localises to the cytoplasm. The catalysed reaction is ATP + H2O + a folded polypeptide = ADP + phosphate + an unfolded polypeptide.. In terms of biological role, together with its co-chaperonin GroES, plays an essential role in assisting protein folding. The GroEL-GroES system forms a nano-cage that allows encapsulation of the non-native substrate proteins and provides a physical environment optimized to promote and accelerate protein folding. This is Chaperonin GroEL from Mycobacterium malmoense.